A 443-amino-acid chain; its full sequence is Transcriptional adapter 2-alpha (443 aa).

Ser6 bears the Phosphoserine mark. The ZZ-type zinc-finger motif lies at 12–69 (SDKPPCRGCSSYLMEPYIKCAECGPPPFFLCLQCFTRGFEYKKHQSDHTYEIMTSDFP). Zn(2+) contacts are provided by Cys17, Cys20, Cys31, Cys34, Cys42, Cys45, His55, and His59. Residues 70 to 122 (VLDPSWTAQEEMALLEAVMDCGFGNWQDVANQMCTKTKEECEKHYMKHFINNP) enclose the SANT domain. Glycyl lysine isopeptide (Lys-Gly) (interchain with G-Cter in SUMO2) cross-links involve residues Lys132 and Lys138. The region spanning 356 to 443 (NSGRRSAPPL…LIREGYITKA (88 aa)) is the SWIRM domain. A DNA-binding region spans residues 426-435 (KTRKIYDFLI).

As to quaternary structure, interacts with GCN5 and NR3C1. Associated with the P/CAF protein in the PCAF complex. Component of the PCAF complex, at least composed of TADA2L/ADA2, TADA3L/ADA3, TAF5L/PAF65-beta, TAF6L/PAF65-alpha, TAF10/TAFII30, TAF12/TAFII20, TAF9/TAFII31 and TRRAP. Component of the ADA2A-containing complex (ATAC), composed of KAT14, KAT2A, TADA2L, TADA3L, ZZ3, MBIP, WDR5, YEATS2, CCDC101 and DR1. Interacts with CCDC134.

The protein resides in the nucleus. Its subcellular location is the chromosome. In terms of biological role, component of the ATAC complex, a complex with histone acetyltransferase activity on histones H3 and H4. Required for the function of some acidic activation domains, which activate transcription from a distant site. Binds double-stranded DNA. Binds dinucleosomes, probably at the linker region between neighboring nucleosomes. Plays a role in chromatin remodeling. May promote TP53/p53 'Lys-321' acetylation, leading to reduced TP53 stability and transcriptional activity. May also promote XRCC6 acetylation thus facilitating cell apoptosis in response to DNA damage. In Rattus norvegicus (Rat), this protein is Transcriptional adapter 2-alpha (Tada2a).